The following is a 591-amino-acid chain: Aspartate--tRNA(Asp/Asn) ligase (591 aa).

Glutamate 176 contributes to the L-aspartate binding site. The aspartate stretch occupies residues glutamine 200–lysine 203. Arginine 222 is an L-aspartate binding site. Residues arginine 222–glutamate 224 and glutamine 231 contribute to the ATP site. Histidine 450 is a binding site for L-aspartate. Residue glutamate 484 participates in ATP binding. Arginine 491 contributes to the L-aspartate binding site. Glycine 536 to arginine 539 provides a ligand contact to ATP.

It belongs to the class-II aminoacyl-tRNA synthetase family. Type 1 subfamily. Homodimer.

It is found in the cytoplasm. It carries out the reaction tRNA(Asx) + L-aspartate + ATP = L-aspartyl-tRNA(Asx) + AMP + diphosphate. Functionally, aspartyl-tRNA synthetase with relaxed tRNA specificity since it is able to aspartylate not only its cognate tRNA(Asp) but also tRNA(Asn). Reaction proceeds in two steps: L-aspartate is first activated by ATP to form Asp-AMP and then transferred to the acceptor end of tRNA(Asp/Asn). This Bacillus anthracis (strain CDC 684 / NRRL 3495) protein is Aspartate--tRNA(Asp/Asn) ligase.